The chain runs to 222 residues: Prolactin-2C5 (222 aa).

The signal sequence occupies residues 1-29 (MLPSLIQPCSWILLLLLVNSSLLWKNVAS). A disulfide bridge links Cys-33 with Cys-40. Asn-57 is a glycosylation site (N-linked (GlcNAc...) asparagine). Disulfide bonds link Cys-87–Cys-197 and Cys-214–Cys-222.

Belongs to the somatotropin/prolactin family. In terms of processing, N-glycosylated and sialylated. In terms of tissue distribution, expressed in placenta (at protein level). Expressed in the tail hair follicle, with highest expression detected in the keratinocytes of the outer root sheath. Expressed in ear skin with lesser amounts in small intestine. Not detected in brain at 18 dpc, postnatal day 25 or postnatal day 55.

It localises to the secreted. The sequence is that of Prolactin-2C5 from Mus musculus (Mouse).